We begin with the raw amino-acid sequence, 615 residues long: 1-deoxy-D-xylulose-5-phosphate synthase (615 aa).

Thiamine diphosphate is bound by residues His-72 and 111 to 113 (GHS). Asp-142 provides a ligand contact to Mg(2+). Thiamine diphosphate-binding positions include 143–144 (GA), Asn-171, Tyr-278, and Glu-360. Asn-171 lines the Mg(2+) pocket.

This sequence belongs to the transketolase family. DXPS subfamily. As to quaternary structure, homodimer. Mg(2+) serves as cofactor. It depends on thiamine diphosphate as a cofactor.

The enzyme catalyses D-glyceraldehyde 3-phosphate + pyruvate + H(+) = 1-deoxy-D-xylulose 5-phosphate + CO2. Its pathway is metabolic intermediate biosynthesis; 1-deoxy-D-xylulose 5-phosphate biosynthesis; 1-deoxy-D-xylulose 5-phosphate from D-glyceraldehyde 3-phosphate and pyruvate: step 1/1. Its function is as follows. Catalyzes the acyloin condensation reaction between C atoms 2 and 3 of pyruvate and glyceraldehyde 3-phosphate to yield 1-deoxy-D-xylulose-5-phosphate (DXP). This Campylobacter jejuni subsp. jejuni serotype O:23/36 (strain 81-176) protein is 1-deoxy-D-xylulose-5-phosphate synthase.